The chain runs to 719 residues: DNA ligase (719 aa).

Residues 42 to 46, 91 to 92, and E125 each bind NAD(+); these read DAEYD and SL. K127 functions as the N6-AMP-lysine intermediate in the catalytic mechanism. NAD(+) contacts are provided by R148, E184, K300, and K324. The Zn(2+) site is built by C429, C432, C447, and C453. One can recognise a BRCT domain in the interval 638–719; it reads TASSPIAGKT…WLQLIEGSYI (82 aa).

Belongs to the NAD-dependent DNA ligase family. LigA subfamily. It depends on Mg(2+) as a cofactor. Mn(2+) serves as cofactor.

The enzyme catalyses NAD(+) + (deoxyribonucleotide)n-3'-hydroxyl + 5'-phospho-(deoxyribonucleotide)m = (deoxyribonucleotide)n+m + AMP + beta-nicotinamide D-nucleotide.. Its function is as follows. DNA ligase that catalyzes the formation of phosphodiester linkages between 5'-phosphoryl and 3'-hydroxyl groups in double-stranded DNA using NAD as a coenzyme and as the energy source for the reaction. It is essential for DNA replication and repair of damaged DNA. This chain is DNA ligase, found in Bartonella quintana (strain Toulouse) (Rochalimaea quintana).